Reading from the N-terminus, the 223-residue chain is Phosphoribosylformylglycinamidine synthase subunit PurQ (223 aa).

The 220-residue stretch at 4-223 (FAVIVFPGTN…FKSIVEWMKK (220 aa)) folds into the Glutamine amidotransferase type-1 domain. C85 acts as the Nucleophile in catalysis. Residues H196 and E198 contribute to the active site.

In terms of assembly, part of the FGAM synthase complex composed of 1 PurL, 1 PurQ and 2 PurS subunits.

It localises to the cytoplasm. The enzyme catalyses N(2)-formyl-N(1)-(5-phospho-beta-D-ribosyl)glycinamide + L-glutamine + ATP + H2O = 2-formamido-N(1)-(5-O-phospho-beta-D-ribosyl)acetamidine + L-glutamate + ADP + phosphate + H(+). It catalyses the reaction L-glutamine + H2O = L-glutamate + NH4(+). It functions in the pathway purine metabolism; IMP biosynthesis via de novo pathway; 5-amino-1-(5-phospho-D-ribosyl)imidazole from N(2)-formyl-N(1)-(5-phospho-D-ribosyl)glycinamide: step 1/2. Its function is as follows. Part of the phosphoribosylformylglycinamidine synthase complex involved in the purines biosynthetic pathway. Catalyzes the ATP-dependent conversion of formylglycinamide ribonucleotide (FGAR) and glutamine to yield formylglycinamidine ribonucleotide (FGAM) and glutamate. The FGAM synthase complex is composed of three subunits. PurQ produces an ammonia molecule by converting glutamine to glutamate. PurL transfers the ammonia molecule to FGAR to form FGAM in an ATP-dependent manner. PurS interacts with PurQ and PurL and is thought to assist in the transfer of the ammonia molecule from PurQ to PurL. The protein is Phosphoribosylformylglycinamidine synthase subunit PurQ of Pyrococcus horikoshii (strain ATCC 700860 / DSM 12428 / JCM 9974 / NBRC 100139 / OT-3).